We begin with the raw amino-acid sequence, 176 residues long: Trypsin inhibitor 1B (176 aa).

2 disulfides stabilise this stretch: Cys39–Cys83 and Cys132–Cys143.

It belongs to the protease inhibitor I3 (leguminous Kunitz-type inhibitor) family.

Its function is as follows. Inhibits trypsin stoichiometrically. The polypeptide is Trypsin inhibitor 1B (Erythrina variegata (Indian coral tree)).